We begin with the raw amino-acid sequence, 305 residues long: Hydrogen peroxide-inducible genes activator (305 aa).

One can recognise an HTH lysR-type domain in the interval 1–58 (MNIRDLEYLVALAEHRHFRRAADSCHVSQPTLSGQIRKLEDELGVMLLERTSRKVLFT). Residues 18 to 37 (FRRAADSCHVSQPTLSGQIR) constitute a DNA-binding region (H-T-H motif). 2 disulfides stabilise this stretch: C180–C259 and C199–C208. C199 carries the cysteine sulfenic acid (-SOH); alternate modification. An S-glutathionyl cysteine; alternate modification is found at C199. C199 is modified (S-nitrosocysteine; alternate).

The protein belongs to the LysR transcriptional regulatory family. Homodimer and homotetramer. Oxidized on Cys-199; the Cys-SOH formed in response to oxidative signaling triggers a conformational change and the onset of transcriptional activity with a specific DNA-binding affinity. Cys-199-SOH rapidly reacts with Cys-208-SH to form a disulfide bond. Post-translationally, S-nitrosylation in response to nitrosative signaling triggers a conformational change and the onset of transcriptional activity with a specific DNA-binding affinity. In terms of processing, glutathionylation in response to redox signaling triggers the onset of transcriptional activity with a specific DNA-binding affinity.

Its activity is regulated as follows. Activated by oxidation of Cys-199 resulting in the alternative formation of cystine, sulfenic acid, S-nitroso- or glutathione-bound cysteine. Functionally, hydrogen peroxide sensor. Activates the expression of a regulon of hydrogen peroxide-inducible genes such as katG, gor, ahpC, ahpF, oxyS (a regulatory RNA), dps, fur and grxA. OxyR expression is negatively autoregulated by binding to a 43 bp region upstream of its own coding sequence. OxyR is inactivated by reduction of its essential disulfide bond by the product of GrxA, itself positively regulated by OxyR. Also has a positive regulatory effect on the production of surface proteins that control the colony morphology and auto-aggregation ability. This is Hydrogen peroxide-inducible genes activator (oxyR) from Escherichia coli O157:H7.